The chain runs to 404 residues: MQIGQRLGTPLSPSATRVMLLGAGELGKEVIIALQRLGVEVVAVDRYPDAPGHQVAHRAHVIDMTDPAALRAIVEAERPHLIVPEIEAIATDALAAIEAAGLAEVIPTARATQLTMNREGIRRLAAEELGLPTSPYAFADSFEAFSAAVAKIGMPCVVKPVMSSSGKGQSVVKTDADVKPAWDYAMAGGRVNHGRVIVEGFVDFDYEITQLTVRAIDPATLDTRTYFCEPVGHVQVAGDYVESWQPQPMSAVALEKSREIAHKVTEALGGRGLFGVELFVRGDDVWFSEVSPRPHDTGLVTLASQRQSEFELHARAILGLPVDPALGTPAASAVIYGGLDERGIAFEGVRDALAVPGADLRLFGKPESFAKRRMGVALATGATVDEARERAKRAAAAVRPVSAR.

N(1)-(5-phospho-beta-D-ribosyl)glycinamide-binding positions include Glu25 to Leu26 and Glu85. ATP contacts are provided by residues Arg118, Lys159, Ser164–Gln169, Glu199–Val202, and Glu207. The region spanning Arg123 to Leu318 is the ATP-grasp domain. 2 residues coordinate Mg(2+): Glu277 and Glu289. N(1)-(5-phospho-beta-D-ribosyl)glycinamide is bound by residues Asp296, Lys365, and Arg372–Arg373.

This sequence belongs to the PurK/PurT family. In terms of assembly, homodimer.

It catalyses the reaction N(1)-(5-phospho-beta-D-ribosyl)glycinamide + formate + ATP = N(2)-formyl-N(1)-(5-phospho-beta-D-ribosyl)glycinamide + ADP + phosphate + H(+). It participates in purine metabolism; IMP biosynthesis via de novo pathway; N(2)-formyl-N(1)-(5-phospho-D-ribosyl)glycinamide from N(1)-(5-phospho-D-ribosyl)glycinamide (formate route): step 1/1. Functionally, involved in the de novo purine biosynthesis. Catalyzes the transfer of formate to 5-phospho-ribosyl-glycinamide (GAR), producing 5-phospho-ribosyl-N-formylglycinamide (FGAR). Formate is provided by PurU via hydrolysis of 10-formyl-tetrahydrofolate. This Burkholderia cenocepacia (strain HI2424) protein is Formate-dependent phosphoribosylglycinamide formyltransferase.